Consider the following 363-residue polypeptide: F-box protein At3g44326 (363 aa).

The disordered stretch occupies residues 1 to 23; sequence MLSSSSSSTVEQPSRGGSPGINA. The F-box domain occupies 27 to 66; it reads DVLRSNILTRLDGSSLAALSCTCSNLNSFCSDESLWRQQC.

This is F-box protein At3g44326 from Arabidopsis thaliana (Mouse-ear cress).